A 132-amino-acid chain; its full sequence is Small ribosomal subunit protein uS8 (132 aa).

The protein belongs to the universal ribosomal protein uS8 family. As to quaternary structure, part of the 30S ribosomal subunit. Contacts proteins S5 and S12.

Its function is as follows. One of the primary rRNA binding proteins, it binds directly to 16S rRNA central domain where it helps coordinate assembly of the platform of the 30S subunit. The polypeptide is Small ribosomal subunit protein uS8 (Streptococcus suis (strain 98HAH33)).